The primary structure comprises 198 residues: FMN-dependent NADH:quinone oxidoreductase (198 aa).

FMN is bound at residue 96–99 (MYNF).

This sequence belongs to the azoreductase type 1 family. In terms of assembly, homodimer. FMN serves as cofactor.

The catalysed reaction is 2 a quinone + NADH + H(+) = 2 a 1,4-benzosemiquinone + NAD(+). It catalyses the reaction N,N-dimethyl-1,4-phenylenediamine + anthranilate + 2 NAD(+) = 2-(4-dimethylaminophenyl)diazenylbenzoate + 2 NADH + 2 H(+). In terms of biological role, quinone reductase that provides resistance to thiol-specific stress caused by electrophilic quinones. Also exhibits azoreductase activity. Catalyzes the reductive cleavage of the azo bond in aromatic azo compounds to the corresponding amines. This chain is FMN-dependent NADH:quinone oxidoreductase, found in Burkholderia mallei (strain ATCC 23344).